A 286-amino-acid chain; its full sequence is D-tagatose-1,6-bisphosphate aldolase subunit KbaY (286 aa).

The active-site Proton donor is the Asp82. 2 residues coordinate Zn(2+): His83 and His180. Position 181 (Gly181) interacts with dihydroxyacetone phosphate. His208 is a binding site for Zn(2+). Dihydroxyacetone phosphate-binding positions include 209–211 and 230–233; these read GAS and NVAT.

Belongs to the class II fructose-bisphosphate aldolase family. TagBP aldolase KbaY subfamily. Homotetramer. Forms a complex with KbaZ. The cofactor is Zn(2+).

The enzyme catalyses D-tagatofuranose 1,6-bisphosphate = D-glyceraldehyde 3-phosphate + dihydroxyacetone phosphate. It participates in carbohydrate metabolism; D-tagatose 6-phosphate degradation; D-glyceraldehyde 3-phosphate and glycerone phosphate from D-tagatose 6-phosphate: step 2/2. Its function is as follows. Catalytic subunit of the tagatose-1,6-bisphosphate aldolase KbaYZ, which catalyzes the reversible aldol condensation of dihydroxyacetone phosphate (DHAP or glycerone-phosphate) with glyceraldehyde 3-phosphate (G3P) to produce tagatose 1,6-bisphosphate (TBP). Requires KbaZ subunit for full activity and stability. This is D-tagatose-1,6-bisphosphate aldolase subunit KbaY from Escherichia coli O17:K52:H18 (strain UMN026 / ExPEC).